The chain runs to 26 residues: uncharacterized protein (26 aa).

The protein belongs to the asfivirus E66L family.

This is an uncharacterized protein from Ornithodoros (relapsing fever ticks).